A 239-amino-acid polypeptide reads, in one-letter code: Putative CCR4-associated factor 1 homolog 8 (239 aa).

The a divalent metal cation site is built by D17, E19, D133, and N204.

The protein belongs to the CAF1 family. Component of the CCR4-NOT complex, at least composed of CRR4 and CAF1 proteins. A divalent metal cation serves as cofactor.

It localises to the nucleus. Its subcellular location is the cytoplasm. The enzyme catalyses Exonucleolytic cleavage of poly(A) to 5'-AMP.. In terms of biological role, ubiquitous transcription factor required for a diverse set of processes. It is a component of the CCR4 complex involved in the control of gene expression. The protein is Putative CCR4-associated factor 1 homolog 8 (CAF1-8) of Arabidopsis thaliana (Mouse-ear cress).